The primary structure comprises 222 residues: Cyclin-U2-1 (222 aa).

This sequence belongs to the cyclin family. Cyclin U/P subfamily. In terms of assembly, interacts with CDKA-1. In terms of tissue distribution, expressed in roots, stems and flowers. Expressed in the shoot apex, leaf primordia and young leaves.

The polypeptide is Cyclin-U2-1 (CYCU2-1) (Arabidopsis thaliana (Mouse-ear cress)).